A 311-amino-acid polypeptide reads, in one-letter code: tRNA(Ile)-lysidine synthase (311 aa).

ATP is bound at residue 32-37; sequence SGGPDS.

This sequence belongs to the tRNA(Ile)-lysidine synthase family.

It localises to the cytoplasm. It carries out the reaction cytidine(34) in tRNA(Ile2) + L-lysine + ATP = lysidine(34) in tRNA(Ile2) + AMP + diphosphate + H(+). Functionally, ligates lysine onto the cytidine present at position 34 of the AUA codon-specific tRNA(Ile) that contains the anticodon CAU, in an ATP-dependent manner. Cytidine is converted to lysidine, thus changing the amino acid specificity of the tRNA from methionine to isoleucine. This Cutibacterium acnes (strain DSM 16379 / KPA171202) (Propionibacterium acnes) protein is tRNA(Ile)-lysidine synthase.